The sequence spans 197 residues: Neurturin (197 aa).

Positions 1 to 19 (MQRWKAAALASVLCSSVLS) are cleaved as a signal peptide. A propeptide spanning residues 20 to 95 (IWMCREGLLL…RAGPRRRRAR (76 aa)) is cleaved from the precursor. The tract at residues 74–93 (TPWAGRPPGPRRRAGPRRRR) is disordered. A compositionally biased stretch (basic residues) spans 82–93 (GPRRRAGPRRRR). 3 cysteine pairs are disulfide-bonded: cysteine 103–cysteine 165, cysteine 130–cysteine 194, and cysteine 134–cysteine 196. Residues arginine 149, arginine 158, arginine 160, and glutamine 162 each contribute to the heparan sulfate group site.

This sequence belongs to the TGF-beta family. GDNF subfamily. As to quaternary structure, homodimer; disulfide-linked. Interacts with GFRA2 coreceptor and RET: forms a 2:2:2 ternary complex composed of NRTN ligand, GFRA2 and RET receptor. Also forms a 4:4:4 tetrameric complex composed of 4 copies of NRTN ligand, GFRA2 and RET receptor, which prevents endocytosis of RET.

The protein localises to the secreted. Functionally, growth factor that supports the survival of sympathetic neurons in culture. May regulate the development and maintenance of the CNS. Involved in the development of the neural crest. Might control the size of non-neuronal cell population such as haemopoietic cells. Acts by binding to its coreceptor, GFRA2, leading to autophosphorylation and activation of the RET receptor. Heparan sulfate-binding is required for signaling. This Homo sapiens (Human) protein is Neurturin.